A 188-amino-acid polypeptide reads, in one-letter code: Elongation factor P-like protein (188 aa).

This sequence belongs to the elongation factor P family.

The protein is Elongation factor P-like protein of Vibrio parahaemolyticus serotype O3:K6 (strain RIMD 2210633).